The primary structure comprises 90 residues: Small ribosomal subunit protein bS16 (90 aa).

It belongs to the bacterial ribosomal protein bS16 family.

This is Small ribosomal subunit protein bS16 from Geobacillus thermodenitrificans (strain NG80-2).